A 65-amino-acid polypeptide reads, in one-letter code: Large ribosomal subunit protein uL29 (65 aa).

It belongs to the universal ribosomal protein uL29 family.

This is Large ribosomal subunit protein uL29 from Dehalococcoides mccartyi (strain ATCC BAA-2100 / JCM 16839 / KCTC 5957 / BAV1).